Reading from the N-terminus, the 451-residue chain is Tubulin alpha-1/alpha-2 chain (451 aa).

Q11 lines the GTP pocket. Residue K40 is modified to N6-acetyllysine. 6 residues coordinate GTP: E71, G144, T145, T179, N206, and N228. Residue E71 participates in Mg(2+) binding. Residue E254 is part of the active site.

Belongs to the tubulin family. As to quaternary structure, dimer of alpha and beta chains. A typical microtubule is a hollow water-filled tube with an outer diameter of 25 nm and an inner diameter of 15 nM. Alpha-beta heterodimers associate head-to-tail to form protofilaments running lengthwise along the microtubule wall with the beta-tubulin subunit facing the microtubule plus end conferring a structural polarity. Microtubules usually have 13 protofilaments but different protofilament numbers can be found in some organisms and specialized cells. The cofactor is Mg(2+). In terms of processing, undergoes a tyrosination/detyrosination cycle, the cyclic removal and re-addition of a C-terminal tyrosine residue by the enzymes tubulin tyrosine carboxypeptidase (TTCP) and tubulin tyrosine ligase (TTL), respectively. Acetylation of alpha chains at Lys-40 stabilizes microtubules and affects affinity and processivity of microtubule motors. This modification has a role in multiple cellular functions, ranging from cell motility, cell cycle progression or cell differentiation to intracellular trafficking and signaling.

The protein localises to the cytoplasm. Its subcellular location is the cytoskeleton. The enzyme catalyses GTP + H2O = GDP + phosphate + H(+). Its function is as follows. Tubulin is the major constituent of microtubules, a cylinder consisting of laterally associated linear protofilaments composed of alpha- and beta-tubulin heterodimers. Microtubules grow by the addition of GTP-tubulin dimers to the microtubule end, where a stabilizing cap forms. Below the cap, tubulin dimers are in GDP-bound state, owing to GTPase activity of alpha-tubulin. The chain is Tubulin alpha-1/alpha-2 chain (TUBA1) from Volvox carteri (Green alga).